Consider the following 130-residue polypeptide: MAKVYYYGTGRRKKSVARVRLVPGEGKFSINDRSLDDYFGLETLKVIVKQPLTLTDTLTKFDVICKVIGGGFTGQAGAIRHGISRALLKADEELRPALKKAGFLTRDPRMKERKKYGLKKARRAPQFSKR.

Positions 104-130 are disordered; the sequence is LTRDPRMKERKKYGLKKARRAPQFSKR. A compositionally biased stretch (basic residues) spans 111–130; it reads KERKKYGLKKARRAPQFSKR.

It belongs to the universal ribosomal protein uS9 family.

The polypeptide is Small ribosomal subunit protein uS9 (Ruminiclostridium cellulolyticum (strain ATCC 35319 / DSM 5812 / JCM 6584 / H10) (Clostridium cellulolyticum)).